We begin with the raw amino-acid sequence, 269 residues long: 4-hydroxy-tetrahydrodipicolinate reductase (269 aa).

11-16 (GPIGRM) lines the NAD(+) pocket. Residue Lys39 participates in NADP(+) binding. NAD(+)-binding positions include 101 to 103 (GTT) and 125 to 128 (ASNF). His158 serves as the catalytic Proton donor/acceptor. His159 contacts (S)-2,3,4,5-tetrahydrodipicolinate. Residue Lys162 is the Proton donor of the active site. Position 168–169 (168–169 (GT)) interacts with (S)-2,3,4,5-tetrahydrodipicolinate.

Belongs to the DapB family. As to quaternary structure, homotetramer.

It localises to the cytoplasm. It catalyses the reaction (S)-2,3,4,5-tetrahydrodipicolinate + NAD(+) + H2O = (2S,4S)-4-hydroxy-2,3,4,5-tetrahydrodipicolinate + NADH + H(+). The enzyme catalyses (S)-2,3,4,5-tetrahydrodipicolinate + NADP(+) + H2O = (2S,4S)-4-hydroxy-2,3,4,5-tetrahydrodipicolinate + NADPH + H(+). It participates in amino-acid biosynthesis; L-lysine biosynthesis via DAP pathway; (S)-tetrahydrodipicolinate from L-aspartate: step 4/4. Its function is as follows. Catalyzes the conversion of 4-hydroxy-tetrahydrodipicolinate (HTPA) to tetrahydrodipicolinate. This Buchnera aphidicola subsp. Acyrthosiphon pisum (strain APS) (Acyrthosiphon pisum symbiotic bacterium) protein is 4-hydroxy-tetrahydrodipicolinate reductase.